The following is a 378-amino-acid chain: UDP-N-acetylglucosamine--N-acetylmuramyl-(pentapeptide) pyrophosphoryl-undecaprenol N-acetylglucosamine transferase (378 aa).

UDP-N-acetyl-alpha-D-glucosamine contacts are provided by residues 13-15 (TGG), Asn124, Arg165, Ser193, and Gln294.

The protein belongs to the glycosyltransferase 28 family. MurG subfamily.

Its subcellular location is the cell inner membrane. It catalyses the reaction di-trans,octa-cis-undecaprenyl diphospho-N-acetyl-alpha-D-muramoyl-L-alanyl-D-glutamyl-meso-2,6-diaminopimeloyl-D-alanyl-D-alanine + UDP-N-acetyl-alpha-D-glucosamine = di-trans,octa-cis-undecaprenyl diphospho-[N-acetyl-alpha-D-glucosaminyl-(1-&gt;4)]-N-acetyl-alpha-D-muramoyl-L-alanyl-D-glutamyl-meso-2,6-diaminopimeloyl-D-alanyl-D-alanine + UDP + H(+). The protein operates within cell wall biogenesis; peptidoglycan biosynthesis. Its function is as follows. Cell wall formation. Catalyzes the transfer of a GlcNAc subunit on undecaprenyl-pyrophosphoryl-MurNAc-pentapeptide (lipid intermediate I) to form undecaprenyl-pyrophosphoryl-MurNAc-(pentapeptide)GlcNAc (lipid intermediate II). The protein is UDP-N-acetylglucosamine--N-acetylmuramyl-(pentapeptide) pyrophosphoryl-undecaprenol N-acetylglucosamine transferase of Agrobacterium fabrum (strain C58 / ATCC 33970) (Agrobacterium tumefaciens (strain C58)).